The primary structure comprises 433 residues: Serine hydroxymethyltransferase (433 aa).

A (6S)-5,6,7,8-tetrahydrofolate-binding site is contributed by 121–123 (AHV). At lysine 227 the chain carries N6-(pyridoxal phosphate)lysine. A (6S)-5,6,7,8-tetrahydrofolate-binding site is contributed by glutamate 243.

The protein belongs to the SHMT family. Homodimer. Pyridoxal 5'-phosphate is required as a cofactor.

It localises to the cytoplasm. Its pathway is amino-acid biosynthesis; glycine biosynthesis; glycine from L-serine: step 1/1. Catalyzes the reversible interconversion of serine and glycine with a modified folate serving as the one-carbon carrier. Also exhibits a pteridine-independent aldolase activity toward beta-hydroxyamino acids, producing glycine and aldehydes, via a retro-aldol mechanism. The polypeptide is Serine hydroxymethyltransferase (Saccharolobus islandicus (strain L.S.2.15 / Lassen #1) (Sulfolobus islandicus)).